Consider the following 295-residue polypeptide: Large ribosomal subunit protein uL15m (295 aa).

The transit peptide at 1 to 20 (MAGTARGCGTSLDLLRSLPR) directs the protein to the mitochondrion. Positions 21-67 (VSLANLKPSPNSRKRERRPRDRRRGRKCGRGHKGERQRGTRPRLGFE) are disordered. Basic residues predominate over residues 32–51 (SRKRERRPRDRRRGRKCGRG).

This sequence belongs to the universal ribosomal protein uL15 family. Component of the mitochondrial ribosome large subunit (39S) which comprises a 16S rRNA and about 50 distinct proteins.

It localises to the mitochondrion. The polypeptide is Large ribosomal subunit protein uL15m (Mrpl15) (Mus musculus (Mouse)).